The primary structure comprises 475 residues: MGSIAKEEQPSKVEKPTFSSKANTLEYAQSLDANDHMRRFRDQFIIPSKANIKATKLEKPGLSDESSIYFCGNSLGLQPKCVKEYLQAHLDTWSSIGVHGHFRDLEDSPLTQWQLLAEHASKQCAPIVGAKASEVAMMGTLTTNLHLLMASFYTPTPEKNKIIMEWKAFPSDHYAIESQIRGHGYNPQEAMVMIGPEEGSYEISTEKILRTIDEHASTTALVLLPGIQYYTGQLFDVKTITAYAQSKGLIVGWDLAHAAGNVPLQLHDWNVDFAVWCTYKYMNAGPGSIAGAFIHERHGEVDYSEGEEKPKYRHRLMGWYGGDQSCRFLMNNKFRPSPGASGYQVSNPSVVDLTSLCAALSIFNQTSMEEISQKTLHLTAYLEHLLLTSNPSNTNPAFRIITPSDPSARGTQLSVLLKPGRLETLSDMLEEAGIVADKRKPDVIRVAPVPLYNTYEDVWRFVQIFNAALEKCEEA.

Residues L141, T142, 169 to 172 (FPSD), D254, H257, and Y279 contribute to the pyridoxal 5'-phosphate site. K280 bears the N6-(pyridoxal phosphate)lysine mark. 2 residues coordinate pyridoxal 5'-phosphate: W319 and N347.

The protein belongs to the kynureninase family. In terms of assembly, homodimer. Pyridoxal 5'-phosphate is required as a cofactor.

The protein localises to the cytoplasm. The enzyme catalyses L-kynurenine + H2O = anthranilate + L-alanine + H(+). It carries out the reaction 3-hydroxy-L-kynurenine + H2O = 3-hydroxyanthranilate + L-alanine + H(+). It functions in the pathway amino-acid degradation; L-kynurenine degradation; L-alanine and anthranilate from L-kynurenine: step 1/1. It participates in cofactor biosynthesis; NAD(+) biosynthesis; quinolinate from L-kynurenine: step 2/3. Its function is as follows. Catalyzes the cleavage of L-kynurenine (L-Kyn) and L-3-hydroxykynurenine (L-3OHKyn) into anthranilic acid (AA) and 3-hydroxyanthranilic acid (3-OHAA), respectively. In Sclerotinia sclerotiorum (strain ATCC 18683 / 1980 / Ss-1) (White mold), this protein is Kynureninase (bna5).